A 48-amino-acid chain; its full sequence is Cytochrome b559 subunit beta (48 aa).

Residues 23 to 39 (WLAVHALAIPTVFFLGA) traverse the membrane as a helical segment. His27 provides a ligand contact to heme.

The protein belongs to the PsbE/PsbF family. As to quaternary structure, heterodimer of an alpha subunit and a beta subunit. PSII is composed of 1 copy each of membrane proteins PsbA, PsbB, PsbC, PsbD, PsbE, PsbF, PsbH, PsbI, PsbJ, PsbK, PsbL, PsbM, PsbT, PsbX, PsbY, Psb30/Ycf12, peripheral proteins PsbO, CyanoQ (PsbQ), PsbU, PsbV and a large number of cofactors. It forms dimeric complexes. The cofactor is heme b.

It localises to the cellular thylakoid membrane. In terms of biological role, this b-type cytochrome is tightly associated with the reaction center of photosystem II (PSII). PSII is a light-driven water:plastoquinone oxidoreductase that uses light energy to abstract electrons from H(2)O, generating O(2) and a proton gradient subsequently used for ATP formation. It consists of a core antenna complex that captures photons, and an electron transfer chain that converts photonic excitation into a charge separation. This is Cytochrome b559 subunit beta from Prochlorococcus marinus (strain SARG / CCMP1375 / SS120).